Reading from the N-terminus, the 383-residue chain is NAD(P) transhydrogenase subunit alpha part 1 (383 aa).

NAD(+) contacts are provided by residues 131–134, Val-181, 201–203, and Gly-231; these read QNMD and DVR.

This sequence belongs to the AlaDH/PNT family. In terms of assembly, heterotrimer of two alpha chains and a beta (PntB) chain; in Rickettsia, the alpha chain is made of two subunits (PntAA and PntAB) and forms a dimer.

The enzyme catalyses NAD(+) + NADPH + H(+)(in) = NADH + NADP(+) + H(+)(out). Its function is as follows. The transhydrogenation between NADH and NADP is coupled to respiration and ATP hydrolysis and functions as a proton pump across the membrane. In Rickettsia prowazekii (strain Madrid E), this protein is NAD(P) transhydrogenase subunit alpha part 1 (pntAA).